A 167-amino-acid chain; its full sequence is Photosystem I assembly protein Ycf3 (167 aa).

TPR repeat units follow at residues 35-68, 72-105, and 120-153; these read AFSYYRDGMSAQSEGEYAEALANYYEALNLEEDP, SFILYNIGLIHASNGEYVKALDYYHKALEANNKL, and AVKASEINDLETAQALFHEAAQYWKQAIKLAPSN.

It belongs to the Ycf3 family.

It localises to the plastid. Its subcellular location is the chloroplast thylakoid membrane. Functionally, essential for the assembly of the photosystem I (PSI) complex. May act as a chaperone-like factor to guide the assembly of the PSI subunits. The polypeptide is Photosystem I assembly protein Ycf3 (Galdieria sulphuraria (Red alga)).